A 217-amino-acid chain; its full sequence is Probable transaldolase (217 aa).

The active-site Schiff-base intermediate with substrate is the Lys83.

The protein belongs to the transaldolase family. Type 3B subfamily.

It is found in the cytoplasm. It carries out the reaction D-sedoheptulose 7-phosphate + D-glyceraldehyde 3-phosphate = D-erythrose 4-phosphate + beta-D-fructose 6-phosphate. The protein operates within carbohydrate degradation; pentose phosphate pathway; D-glyceraldehyde 3-phosphate and beta-D-fructose 6-phosphate from D-ribose 5-phosphate and D-xylulose 5-phosphate (non-oxidative stage): step 2/3. Its function is as follows. Transaldolase is important for the balance of metabolites in the pentose-phosphate pathway. In Coprothermobacter proteolyticus (strain ATCC 35245 / DSM 5265 / OCM 4 / BT), this protein is Probable transaldolase.